Here is a 151-residue protein sequence, read N- to C-terminus: MMTEEHTDLEARIIKDIHCKEIDLVNRDPKNINEDIVKVDFEDVIAEPEGTYSFDGVWRVSYTTFTVSKYWCYRLLSTLLGVPLALLWGFLFACISFCHIWAVVPCIKSYLIEIQCISHIYSLCIRTFCNPLFAALGQVCSNIKVVLRREG.

The Cytoplasmic segment spans residues 1-83 (MMTEEHTDLE…RLLSTLLGVP (83 aa)). A Glycyl lysine isopeptide (Lys-Gly) (interchain with G-Cter in SUMO3) cross-link involves residue Lys38. The helical intramembrane region spans 84–104 (LALLWGFLFACISFCHIWAVV). The Cytoplasmic portion of the chain corresponds to 105–151 (PCIKSYLIEIQCISHIYSLCIRTFCNPLFAALGQVCSNIKVVLRREG).

The protein belongs to the caveolin family. Homooligomer. Interacts with DYSF. Interacts with DLG1 and KCNA5; forms a ternary complex. Interacts with DAG1 (via its C-terminal); the interaction prevents binding of DAG1 with DMD. Interacts with TRIM72. Interacts with MUSK; may regulate MUSK signaling. Interacts with POPDC1. Interacts with CAVIN1, CAVIN2 and CAVIN4. Post-translationally, sumoylation with SUMO3 by PIAS4 may reduce agonist-induced internalization and desensitization of adrenergic receptor ABRD2. In terms of tissue distribution, expressed predominantly in muscle.

The protein localises to the golgi apparatus membrane. Its subcellular location is the cell membrane. The protein resides in the membrane. It localises to the caveola. It is found in the sarcolemma. Its function is as follows. May act as a scaffolding protein within caveolar membranes. Interacts directly with G-protein alpha subunits and can functionally regulate their activity. May also regulate voltage-gated potassium channels. Plays a role in the sarcolemma repair mechanism of both skeletal muscle and cardiomyocytes that permits rapid resealing of membranes disrupted by mechanical stress. Mediates the recruitment of CAVIN2 and CAVIN3 proteins to the caveolae. This chain is Caveolin-3 (Cav3), found in Rattus norvegicus (Rat).